The primary structure comprises 423 residues: MQYKDENGVNEPSRRRLLKVIGALALAGSCPVAHAQKTQSAPGTLSPDARNEKQPFYGEHQAGILTPQQAAMMLVAFDVLASDKADLERLFRLLTQRFAFLTQGGAAPETPNPRLPPLDSGILGGYIAPDNLTITLSVGHSLFDERFGLAPQMPKKLQKMTRFPNDSLDAALCHGDVLLQICANTQDTVIHALRDIIKHTPDLLSVRWKREGFISDHAARSKGKETPINLLGFKDGTANPDSQNDKLMQKVVWVTADQQEPAWTIGGSYQAVRLIQFRVEFWDRTPLKEQQTIFGRDKQTGAPLGMQHEHDVPDYASDPEGKVIALDSHIRLANPRTAESESSLMLRRGYSYSLGVTNSGQLDMGLLFVCYQHDLEKGFLTVQKRLNGEALEEYVKPIGGGYFFALPGVKDANDYFGSALLRV.

A signal peptide (tat-type signal) is located at residues 1–35 (MQYKDENGVNEPSRRRLLKVIGALALAGSCPVAHA). 236-238 (GTA) contributes to the heme b binding site. Residues 236–238 (GTA) and Arg-296 contribute to the protoporphyrin IX site. Heme b-binding positions include His-329, 334–336 (NPR), and Arg-347.

Homodimer. Part of a ferrous iron transporter composed of EfeU, EfeO and EfeB. However, this EfeUOB tripartite iron transporter is defective in E.coli strain K12 due to a frameshift mutation in EfeU. The cofactor is heme b. Exported by the Tat system. The position of the signal peptide cleavage has been experimentally proven. Can also be exported by the Sec system.

The protein resides in the periplasm. The catalysed reaction is heme b + 2 H(+) = protoporphyrin IX + Fe(2+). Involved in the recovery of exogenous heme iron. Extracts iron from heme while preserving the protoporphyrin ring intact. Also displays peroxidase activity on guaiacol in vitro. In Escherichia coli (strain K12), this protein is Deferrochelatase (efeB).